Here is a 241-residue protein sequence, read N- to C-terminus: MVKDTLFSTPIAKLGDFIFDENVAEVFPDMIQRSVPGYSNIITAIGMLAERFVTADSNVYDLGCSRGAATLSARRNIHQPNVKIIGIDNSQPMVERCRQHIAAYHSEIPVEILCNDIRHVEIKNASMVILNFTLQFLPPEDRVALLTKIYEGLNPNGVLVLSEKFRFEDTKIDHLLIDLHHQFKRANGYSELEVSQKRTALENVMRTDSIKTHKVRLKNVGFSQVELWFQCFNFGSMIAVK.

S-adenosyl-L-methionine contacts are provided by residues Tyr-38, 63–65, 88–89, 116–117, Asn-131, and Arg-198; these read GCS, DN, and DI.

The protein belongs to the class I-like SAM-binding methyltransferase superfamily. Cx-SAM synthase family. Homodimer.

It catalyses the reaction prephenate + S-adenosyl-L-methionine = carboxy-S-adenosyl-L-methionine + 3-phenylpyruvate + H2O. In terms of biological role, catalyzes the conversion of S-adenosyl-L-methionine (SAM) to carboxy-S-adenosyl-L-methionine (Cx-SAM). This chain is Carboxy-S-adenosyl-L-methionine synthase, found in Haemophilus influenzae (strain PittGG).